Reading from the N-terminus, the 460-residue chain is Baeyer-Villiger oxidase AgnL3 (460 aa).

This sequence belongs to the questin oxidase family. It depends on NADPH as a cofactor.

It participates in secondary metabolite biosynthesis. Baeyer-Villiger oxidase; part of the gene cluster that mediates the biosynthesis of agnestins, dihydroxy-xanthone metabolites. The pathway begins with the assembly and cyclization of atrochrysone thioester by the non-reducing polyketide synthase Agnpks1. The atrochrysone carboxyl ACP thioesterase AgnL7 then breaks the thioester bond and releases the atrochrysone carboxylic acid as the first enzyme-free intermediate. The decarboxylase AgnL1 then catalyzes the concerted decarboxylation-elimination required to convert atochrysone carboxylic acid into emodin anthrone, which is further oxidized to emodin by the anthrone oxygenase AgnL2. Emodin then undergoes reduction catalyzed by the oxidoreductase AgnL4 to yield the dihydroquinone tautomer which is the substrate for reduction by the short chain dehydrogenase AgnL6 reduction to produce hydroxyketone, followed by AgnL8 dehydration and likely spontaneous autoxidation to chrysophanol. Baeyer-Villiger oxidation by the oxidase AgnL3 leads to monodictyphenone via cleavage of the C-10/C-10a bond of chrysophanol. Alternative cleavage at the C-4a/C-10 bond of chrysophanol also leads to the formation some cephalone F. Further conversion to agnestins A and B, requires reduction to dihydro-monodictyphenone, oxidation to agnestin C probably via an epoxide, and rearrangement to either agnestin A or agnestin B directly, although agnestin A or agnestin B can also interconvert. Within the cluster, AgnR1 is the only unassigned oxidoreductase present which could be involved in this conversion. However, AgnR1 seems not to be involved in this step, and thus genes involved in the proposed oxidation/reduction may be located elsewhere on the genome. Further agnestin A derivatives are probably formed by spontaneous decarboxylations, dehydrations and methanolysis reactions. This is Baeyer-Villiger oxidase AgnL3 from Paecilomyces divaricatus (Penicillium divaricatum).